The chain runs to 236 residues: Pyridoxine 5'-phosphate synthase (236 aa).

Position 6 (asparagine 6) interacts with 3-amino-2-oxopropyl phosphate. A 1-deoxy-D-xylulose 5-phosphate-binding site is contributed by 8 to 9 (DH). Arginine 17 provides a ligand contact to 3-amino-2-oxopropyl phosphate. The active-site Proton acceptor is histidine 42. The 1-deoxy-D-xylulose 5-phosphate site is built by arginine 44 and histidine 49. The Proton acceptor role is filled by glutamate 69. Position 99 (threonine 99) interacts with 1-deoxy-D-xylulose 5-phosphate. The active-site Proton donor is the histidine 190. 3-amino-2-oxopropyl phosphate contacts are provided by residues glycine 191 and 212–213 (GH).

The protein belongs to the PNP synthase family. In terms of assembly, homooctamer; tetramer of dimers.

Its subcellular location is the cytoplasm. It catalyses the reaction 3-amino-2-oxopropyl phosphate + 1-deoxy-D-xylulose 5-phosphate = pyridoxine 5'-phosphate + phosphate + 2 H2O + H(+). Its pathway is cofactor biosynthesis; pyridoxine 5'-phosphate biosynthesis; pyridoxine 5'-phosphate from D-erythrose 4-phosphate: step 5/5. Functionally, catalyzes the complicated ring closure reaction between the two acyclic compounds 1-deoxy-D-xylulose-5-phosphate (DXP) and 3-amino-2-oxopropyl phosphate (1-amino-acetone-3-phosphate or AAP) to form pyridoxine 5'-phosphate (PNP) and inorganic phosphate. This chain is Pyridoxine 5'-phosphate synthase, found in Chlorobium phaeobacteroides (strain DSM 266 / SMG 266 / 2430).